Reading from the N-terminus, the 558-residue chain is Glutamine-dependent NAD(+) synthetase (558 aa).

Positions 2–262 (FTIALAQLNP…LALLSYDLSS (261 aa)) constitute a CN hydrolase domain. The Proton acceptor; for glutaminase activity role is filled by Glu42. The active-site For glutaminase activity is the Lys117. Residue Tyr123 participates in L-glutamine binding. Cys153 serves as the catalytic Nucleophile; for glutaminase activity. L-glutamine contacts are provided by Ser190 and Lys196. The segment at 284 to 558 (ALVLGVGDYL…IAQAFHPQGS (275 aa)) is ligase. 304 to 311 (GLSGGIDS) lines the ATP pocket. Position 387 (Asn387) interacts with deamido-NAD(+). Thr411 is a binding site for ATP. Deamido-NAD(+) is bound by residues Glu416 and Lys526.

This sequence in the C-terminal section; belongs to the NAD synthetase family.

The catalysed reaction is deamido-NAD(+) + L-glutamine + ATP + H2O = L-glutamate + AMP + diphosphate + NAD(+) + H(+). Its pathway is cofactor biosynthesis; NAD(+) biosynthesis; NAD(+) from deamido-NAD(+) (L-Gln route): step 1/1. Its function is as follows. Catalyzes the ATP-dependent amidation of deamido-NAD to form NAD. Uses L-glutamine as a nitrogen source. In Synechocystis sp. (strain ATCC 27184 / PCC 6803 / Kazusa), this protein is Glutamine-dependent NAD(+) synthetase.